The sequence spans 959 residues: MAASTGYVRLWGAARCWVLRRPMLAAAGGRVPTAAGAWLLRGQRTCDASPPWALWGRGPAIGGQWRGFWEASSRGGGAFSGGEDASEGGAEEGAGGAGGSAGAGEGPVITALTPMTIPDVFPHLPLIAITRNPVFPRFIKIIEVKNKKLVELLRRKVRLAQPYVGVFLKRDDSNESDVVESLDEIYHTGTFAQIHEMQDLGDKLRMIVMGHRRVHISRQLEVEPEEPEAENKHKPRRKSKRGKKEAEDELSARHPAELAMEPTPELPAEVLMVEVENVVHEDFQVTEEVKALTAEIVKTIRDIIALNPLYRESVLQMMQAGQRVVDNPIYLSDMGAALTGAESHELQDVLEETNIPKRLYKALSLLKKEFELSKLQQRLGREVEEKIKQTHRKYLLQEQLKIIKKELGLEKDDKDAIEEKFRERLKELVVPKHVMDVVDEELSKLGLLDNHSSEFNVTRNYLDWLTSIPWGKYSNENLDLARAQAVLEEDHYGMEDVKKRILEFIAVSQLRGSTQGKILCFYGPPGVGKTSIARSIARALNREYFRFSVGGMTDVAEIKGHRRTYVGAMPGKIIQCLKKTKTENPLILIDEVDKIGRGYQGDPSSALLELLDPEQNANFLDHYLDVPVDLSKVLFICTANVTDTIPEPLRDRMEMINVSGYVAQEKLAIAERYLVPQARALCGLDESKAKLSSDVLTLLIKQYCRESGVRNLQKQVEKVLRKSAYKIVSGEAESVEVTPENLQDFVGKPVFTVERMYDVTPPGVVMGLAWTAMGGSTLFVETSLRRPQDKDAKGDKDGSLEVTGQLGEVMKESARIAYTFARAFLMQHAPANDYLVTSHIHLHVPEGATPKDGPSAGCTIVTALLSLAMGRPVRQNLAMTGEVSLTGKILPVGGIKEKTIAAKRAGVTCIVLPAENKKDFYDLAAFITEGLEVHFVEHYREIFDIAFPDEQAEALAVER.

A mitochondrion-targeting transit peptide spans 1 to 67; sequence MAASTGYVRL…GPAIGGQWRG (67 aa). 2 disordered regions span residues 77-102 and 218-257; these read GAFSGGEDASEGGAEEGAGGAGGSAG and RQLEVEPEEPEAENKHKPRRKSKRGKKEAEDELSARHPAE. A compositionally biased stretch (gly residues) spans 91–102; it reads EEGAGGAGGSAG. One can recognise a Lon N-terminal domain in the interval 124-370; sequence LPLIAITRNP…KALSLLKKEF (247 aa). Residues 233 to 243 show a composition bias toward basic residues; the sequence is HKPRRKSKRGK. Residues 244 to 256 are compositionally biased toward basic and acidic residues; that stretch reads KEAEDELSARHPA. 523–530 contacts ATP; the sequence is GPPGVGKT. In terms of domain architecture, Lon proteolytic spans 759 to 949; it reads VTPPGVVMGL…REIFDIAFPD (191 aa). Catalysis depends on residues S855 and K898.

The protein belongs to the peptidase S16 family. Homohexamer. Organized in a ring with a central cavity. The ATP-binding and proteolytic domains (AP-domain) form a hexameric chamber, while the N-terminal domain is arranged as a trimer of dimers. DNA and RNA binding is stimulated by substrate and inhibited by ATP binding. Interacts with TWNK and mitochondrial DNA polymerase subunit POLG. As to expression, duodenum, heart, lung and liver, but not thymus.

The protein resides in the mitochondrion matrix. The catalysed reaction is Hydrolysis of proteins in presence of ATP.. Its activity is regulated as follows. Peptidase activity is subject to substrate inhibition by ATP. In terms of biological role, ATP-dependent serine protease that mediates the selective degradation of misfolded, unassembled or oxidatively damaged polypeptides as well as certain short-lived regulatory proteins in the mitochondrial matrix. Endogenous substrates include mitochondrial steroidogenic acute regulatory (StAR) protein, DELE1, helicase Twinkle (TWNK) and the large ribosomal subunit protein MRPL32/bL32m. MRPL32/bL32m is protected from degradation by LONP1 when it is bound to a nucleic acid (RNA), but TWNK is not. May also have a chaperone function in the assembly of inner membrane protein complexes. Participates in the regulation of mitochondrial gene expression and in the maintenance of the integrity of the mitochondrial genome. Binds to mitochondrial promoters and RNA in a single-stranded, site-specific, and strand-specific manner. May regulate mitochondrial DNA replication and/or gene expression using site-specific, single-stranded DNA binding to target the degradation of regulatory proteins binding to adjacent sites in mitochondrial promoters. The polypeptide is Lon protease homolog, mitochondrial (Homo sapiens (Human)).